We begin with the raw amino-acid sequence, 149 residues long: Deoxyuridine 5'-triphosphate nucleotidohydrolase (149 aa).

Substrate-binding positions include 68–70 (RSG), Asn-81, and 85–87 (LID).

It belongs to the dUTPase family. Mg(2+) is required as a cofactor.

It catalyses the reaction dUTP + H2O = dUMP + diphosphate + H(+). The protein operates within pyrimidine metabolism; dUMP biosynthesis; dUMP from dCTP (dUTP route): step 2/2. Functionally, this enzyme is involved in nucleotide metabolism: it produces dUMP, the immediate precursor of thymidine nucleotides and it decreases the intracellular concentration of dUTP so that uracil cannot be incorporated into DNA. The protein is Deoxyuridine 5'-triphosphate nucleotidohydrolase of Azoarcus sp. (strain BH72).